Reading from the N-terminus, the 457-residue chain is Phosphoglucosamine mutase (457 aa).

Serine 109 acts as the Phosphoserine intermediate in catalysis. Serine 109, aspartate 251, aspartate 253, and aspartate 255 together coordinate Mg(2+). Serine 109 carries the phosphoserine modification.

It belongs to the phosphohexose mutase family. Mg(2+) is required as a cofactor. In terms of processing, activated by phosphorylation.

The catalysed reaction is alpha-D-glucosamine 1-phosphate = D-glucosamine 6-phosphate. Functionally, catalyzes the conversion of glucosamine-6-phosphate to glucosamine-1-phosphate. The protein is Phosphoglucosamine mutase of Bdellovibrio bacteriovorus (strain ATCC 15356 / DSM 50701 / NCIMB 9529 / HD100).